A 320-amino-acid polypeptide reads, in one-letter code: Short-chain dehydrogenase TIC 32 B, chloroplastic (320 aa).

Residues 40-46 (GGTSGIG), 92-93 (DL), N119, and T140 each bind NADP(+). Substrate is bound at residue S174. Y196 functions as the Proton acceptor in the catalytic mechanism. The interaction with calmodulin stretch occupies residues 301–317 (DTTLADKLWDFSIKLVD).

Belongs to the short-chain dehydrogenases/reductases (SDR) family. Part of the Tic complex.

The protein resides in the plastid. Its subcellular location is the chloroplast inner membrane. In terms of biological role, involved in protein precursor import into chloroplasts. This Brassica napus (Rape) protein is Short-chain dehydrogenase TIC 32 B, chloroplastic.